We begin with the raw amino-acid sequence, 414 residues long: Secreted beta-glucosidase sun1 (414 aa).

A signal peptide spans 1-19; sequence MKFNTVALTLATAGSLVTA. N-linked (GlcNAc...) asparagine glycosylation occurs at N80. The segment covering 115 to 140 has biased composition (low complexity); sequence TSASSSETVQTPAASSSSASSSSTAT. A disordered region spans residues 115–141; the sequence is TSASSSETVQTPAASSSSASSSSTATG. A glycan (N-linked (GlcNAc...) asparagine) is linked at N377.

The protein belongs to the SUN family. Post-translationally, highly glycosylated.

The protein resides in the secreted. Its subcellular location is the cell wall. In terms of biological role, cell surface beta-glucosidase involved in cell wall biosynthesis and septation, and thus required for normal growth and correct hyphal morphogenesis. Has hydrolytic activity on linear (1-&gt;3)-beta-D-glucans such as laminaribiose and other laminarioligosaccharides. Also has a minor transferase activity. The sequence is that of Secreted beta-glucosidase sun1 (sun1) from Aspergillus fumigatus (strain ATCC MYA-4609 / CBS 101355 / FGSC A1100 / Af293) (Neosartorya fumigata).